A 323-amino-acid chain; its full sequence is Beta-ketoacyl-[acyl-carrier-protein] synthase III (323 aa).

Active-site residues include Cys113 and His250. The interval 251 to 255 (QANKR) is ACP-binding. Residue Asn280 is part of the active site.

Belongs to the thiolase-like superfamily. FabH family. Homodimer.

Its subcellular location is the cytoplasm. The catalysed reaction is malonyl-[ACP] + acetyl-CoA + H(+) = 3-oxobutanoyl-[ACP] + CO2 + CoA. The protein operates within lipid metabolism; fatty acid biosynthesis. In terms of biological role, catalyzes the condensation reaction of fatty acid synthesis by the addition to an acyl acceptor of two carbons from malonyl-ACP. Catalyzes the first condensation reaction which initiates fatty acid synthesis and may therefore play a role in governing the total rate of fatty acid production. Possesses both acetoacetyl-ACP synthase and acetyl transacylase activities. Its substrate specificity determines the biosynthesis of branched-chain and/or straight-chain of fatty acids. The polypeptide is Beta-ketoacyl-[acyl-carrier-protein] synthase III (Mesorhizobium japonicum (strain LMG 29417 / CECT 9101 / MAFF 303099) (Mesorhizobium loti (strain MAFF 303099))).